Reading from the N-terminus, the 221-residue chain is UPF0502 protein XOO0224 (221 aa).

The protein belongs to the UPF0502 family.

This chain is UPF0502 protein XOO0224, found in Xanthomonas oryzae pv. oryzae (strain MAFF 311018).